The following is a 276-amino-acid chain: 4-hydroxy-tetrahydrodipicolinate reductase (276 aa).

NAD(+)-binding positions include 18–23 and Asp-44; that span reads GASGRM. Position 45 (Arg-45) interacts with NADP(+). Residues 107–109 and 131–134 contribute to the NAD(+) site; these read GTT and APNM. His-164 functions as the Proton donor/acceptor in the catalytic mechanism. His-165 lines the (S)-2,3,4,5-tetrahydrodipicolinate pocket. The active-site Proton donor is Lys-168. Residue 174-175 coordinates (S)-2,3,4,5-tetrahydrodipicolinate; that stretch reads GT.

This sequence belongs to the DapB family.

Its subcellular location is the cytoplasm. The catalysed reaction is (S)-2,3,4,5-tetrahydrodipicolinate + NAD(+) + H2O = (2S,4S)-4-hydroxy-2,3,4,5-tetrahydrodipicolinate + NADH + H(+). It carries out the reaction (S)-2,3,4,5-tetrahydrodipicolinate + NADP(+) + H2O = (2S,4S)-4-hydroxy-2,3,4,5-tetrahydrodipicolinate + NADPH + H(+). The protein operates within amino-acid biosynthesis; L-lysine biosynthesis via DAP pathway; (S)-tetrahydrodipicolinate from L-aspartate: step 4/4. In terms of biological role, catalyzes the conversion of 4-hydroxy-tetrahydrodipicolinate (HTPA) to tetrahydrodipicolinate. This is 4-hydroxy-tetrahydrodipicolinate reductase from Aromatoleum aromaticum (strain DSM 19018 / LMG 30748 / EbN1) (Azoarcus sp. (strain EbN1)).